We begin with the raw amino-acid sequence, 272 residues long: Putative bark agglutinin LECRPA3 (272 aa).

Positions 1–29 (PFNPETVYALLAMLISFFVLLASARKENS) are cleaved as a signal peptide. N-linked (GlcNAc...) asparagine glycans are attached at residues Asn-36, Asn-39, and Asn-65. Mn(2+) is bound by residues Glu-150 and Asp-152. 4 residues coordinate Ca(2+): Asp-152, Tyr-154, Asn-156, and Asp-159. Mn(2+)-binding residues include Asp-159 and His-164.

It belongs to the leguminous lectin family. Homotetramer. Weak expression in bark. The lectin accumulates in the inner bark in autumn.

Its function is as follows. Bark lectins are storage proteins that probably maintain stocks of nitrogen during dormant period. Self-aggregatable molecules that can bind their own carbohydrate side chains. They could also play a role in the plant's defense against phytophagous invertebrates or herbivorous higher animals. The polypeptide is Putative bark agglutinin LECRPA3 (Robinia pseudoacacia (Black locust)).